The chain runs to 235 residues: Photosystem I assembly protein Ycf4 (235 aa).

Helical transmembrane passes span 21–43 (NLCWACILFLGSLGFLLVGTSSY) and 63–85 (GIVMSFYGIAGLFISSYLWCTIL).

Belongs to the Ycf4 family.

Its subcellular location is the plastid. It is found in the chloroplast thylakoid membrane. Functionally, seems to be required for the assembly of the photosystem I complex. The sequence is that of Photosystem I assembly protein Ycf4 from Amborella trichopoda.